The primary structure comprises 185 residues: Ribosome-recycling factor (185 aa).

It belongs to the RRF family.

It is found in the cytoplasm. Its function is as follows. Responsible for the release of ribosomes from messenger RNA at the termination of protein biosynthesis. May increase the efficiency of translation by recycling ribosomes from one round of translation to another. The chain is Ribosome-recycling factor from Streptococcus mutans serotype c (strain ATCC 700610 / UA159).